The sequence spans 238 residues: Sugar fermentation stimulation protein homolog (238 aa).

The protein belongs to the SfsA family.

This Brucella melitensis biotype 1 (strain ATCC 23456 / CCUG 17765 / NCTC 10094 / 16M) protein is Sugar fermentation stimulation protein homolog.